A 256-amino-acid polypeptide reads, in one-letter code: Probable aquaporin TIP-type alpha (256 aa).

The Cytoplasmic portion of the chain corresponds to 1–24 (MATRRYSFGRTDEATHPDSMRASL). Position 7 is a phosphoserine; by CPK (serine 7). A helical transmembrane segment spans residues 25–44 (AEFASTFIFVFAGEGSGLAL). The Vacuolar segment spans residues 45–57 (VKIYQDSAFSAGE). The helical transmembrane segment at 58–77 (LLALALAHAFALFAAVSASM) threads the bilayer. Residues 78–102 (HVSGGHVNPAVSFGALIGGRISVIR) lie on the Cytoplasmic side of the membrane. The NPA 1 motif lies at 85 to 87 (NPA). A helical transmembrane segment spans residues 103–121 (AVYYWIAQLLGSIVAALVL). At 122–143 (RLVTNNMRPSGFHVSPGVGVGH) the chain is on the vacuolar side. The helical transmembrane segment at 144–164 (MFILEVVMTFGLMYTVYGTAI) threads the bilayer. Over 165–169 (DPKRG) the chain is Cytoplasmic. The helical transmembrane segment at 170-189 (AVSYIAPLAIGLIVGANILV) threads the bilayer. At 190–216 (GGPFDGACMNPALAFGPSLVGWQWHQH) the chain is on the vacuolar side. The NPA 2 motif lies at 199-201 (NPA). Residues 217 to 239 (WIFWVGPLLGAALAALVYEYAVI) traverse the membrane as a helical segment. At 240-256 (PIEPPPHHHQPLATEDY) the chain is on the cytoplasmic side.

It belongs to the MIP/aquaporin (TC 1.A.8) family. TIP (TC 1.A.8.10) subfamily. Phosphorylated by a tonoplast-bound calcium-dependent protein kinase. As to expression, found in all seed tissues that are alive at seed maturity, but not in tissues that lose viability during seed maturation.

The protein localises to the vacuole membrane. In terms of biological role, channel protein in tonoplast. These proteins may allow the diffusion of amino acids and/or peptides from the vacuolar compartment to the cytoplasm. This chain is Probable aquaporin TIP-type alpha, found in Phaseolus vulgaris (Kidney bean).